Here is a 134-residue protein sequence, read N- to C-terminus: Loki profilin-2 (134 aa).

A loki loop region spans residues 55–62 (LALGEKGI).

The protein belongs to the Asgard profilin family.

The protein localises to the cytoplasm. It localises to the cytoskeleton. Inhibition of rabbit actin polymerization is reduced by phosphatidylinositol-(4,5)-P2(1,2-dipalmitoyl), a soluble form of the phospholipid phosphatidylinositol, suggesting an unknown lipid might regulate actin-profilin interaction in vivo. Its function is as follows. Binds to actin and affects the structure of the cytoskeleton. At high concentrations inhibits spontaneous rabbit actin nucleation. This strongly suggests this archaea has a profilin-regulated actin system, and actin-type genes can be identified in this organism. This is Loki profilin-2 from Lokiarchaeum sp. (strain GC14_75).